The following is a 255-amino-acid chain: ATP synthase subunit a (255 aa).

Positions 1-6 are cleaved as a propeptide — removed in mature form; that stretch reads MNFIIN. The next 5 helical transmembrane spans lie at 32–52, 91–111, 121–141, 159–200, and 219–251; these read LTSFSIYSIAVVALILGFSIL, LFPFMFSLFMYILIANVVSLV, LIWTIGLSVAIWIGCTLTGLA, PLVP…LAGL, and LSILLGIVALESAIAFIQAIVFTILTCSYIKDA.

In terms of assembly, F-type ATP synthases have 2 components, the catalytic core F(1) and the membrane-embedded component F(0), linked together by a central stalk and a peripheral stalk. The central stalk, also called rotor shaft, is often seen as part of F(1). The peripheral stalk is seen as part of F(0). F(0) contains the membrane channel next to the rotor. F-type ATP synthases form dimers but each monomer functions independently in ATP generation. The dimer consists of 17 different polypeptides: ATP1 (subunit alpha, 3 molecules per monomer, part of F(1)), ATP2 (subunit beta, 3 copies per monomer, part of F(1)), ATP3 (subunit gamma, part of the central stalk), ATP4 (subunit b, part of the peripheral stalk), ATP5/OSCP (subunit 5/OSCP, part of the peripheral stalk), ATP6 (subunit a, part of the peripheral stalk), ATP7 (subunit d, part of the peripheral stalk), ATP8 (subunit 8, part of the peripheral stalk), OLI1 (subunit c, part of the rotor, 10 molecules per monomer), ATP14 (subunit h, part of the peripheral stalk), ATP15 (subunit epsilon, part of the central stalk), ATP16 (subunit delta, part of the central stalk), ATP17 (subunit f, part of the peripheral stalk), ATP18 (subunit i/j, part of the peripheral stalk), ATP19 (subunit k, dimer-specific, at interface between monomers), ATP20 (subunit g, at interface between monomers), TIM11 (subunit e, at interface between monomers).

Its subcellular location is the mitochondrion inner membrane. Mitochondrial membrane ATP synthase (F(1)F(0) ATP synthase or Complex V) produces ATP from ADP in the presence of a proton gradient across the membrane which is generated by electron transport complexes of the respiratory chain. F-type ATP synthases consist of two structural domains, F(1) - containing the extramembraneous catalytic core, and F(0) - containing the membrane proton channel, linked together by a central stalk and a peripheral stalk. During catalysis, ATP synthesis in the catalytic domain of F(1) is coupled via a rotary mechanism of the central stalk subunits to proton translocation. Key component of the proton channel; it may play a direct role in the translocation of protons across the membrane. The protein is ATP synthase subunit a of Yarrowia lipolytica (strain CLIB 122 / E 150) (Yeast).